Here is a 130-residue protein sequence, read N- to C-terminus: Mediator of RNA polymerase II transcription subunit 10 (130 aa).

The protein belongs to the Mediator complex subunit 10 family. Component of the Mediator complex.

The protein resides in the nucleus. Component of the Mediator complex, a coactivator involved in the regulated transcription of nearly all RNA polymerase II-dependent genes. Mediator functions as a bridge to convey information from gene-specific regulatory proteins to the basal RNA polymerase II transcription machinery. Mediator is recruited to promoters by direct interactions with regulatory proteins and serves as a scaffold for the assembly of a functional preinitiation complex with RNA polymerase II and the general transcription factors. The sequence is that of Mediator of RNA polymerase II transcription subunit 10 (MED10) from Aedes aegypti (Yellowfever mosquito).